A 179-amino-acid chain; its full sequence is Cell division protein SepF (179 aa).

The disordered stretch occupies residues 22–53 (LPYEKRDEPVFTPVNSSQEPALPMNQPSQSVG). Polar residues predominate over residues 34–53 (PVNSSQEPALPMNQPSQSVG).

It belongs to the SepF family. Homodimer. Interacts with FtsZ.

The protein resides in the cytoplasm. Functionally, cell division protein that is part of the divisome complex and is recruited early to the Z-ring. Probably stimulates Z-ring formation, perhaps through the cross-linking of FtsZ protofilaments. Its function overlaps with FtsA. The chain is Cell division protein SepF from Streptococcus pneumoniae (strain P1031).